We begin with the raw amino-acid sequence, 402 residues long: Deoxyguanosinetriphosphate triphosphohydrolase-like protein (402 aa).

The interval 20–39 is disordered; the sequence is PAFSRGRLVPEPESPTRTPF. The HD domain occupies 73-217; the sequence is RLTHTIEVAQ…AAIADDIAYN (145 aa).

It belongs to the dGTPase family. Type 2 subfamily.

This is Deoxyguanosinetriphosphate triphosphohydrolase-like protein from Brucella canis (strain ATCC 23365 / NCTC 10854 / RM-666).